The sequence spans 66 residues: Type 3 secretion system chaperone YscE (66 aa).

This sequence belongs to the YscE family. As to quaternary structure, component of the heterodimeric YscE-YscG chaperone. The YscE-YscG chaperone forms a stable ternary complex with YscF/SctF. YscE interacts with YscG, but makes very little direct contact with YscF. Homodimer in solution.

The protein resides in the cytoplasm. In terms of biological role, chaperone of the type III secretion system (T3SS), also called injectisome, which is used to inject bacterial effector proteins into eukaryotic host cells. Along with YscG, prevents premature polymerization of the YscF/SctF needle protein within the cytoplasm. Is also required for stable expression of cytosolic YscF and for YscF secretion. Likely plays a role in targeting YscF present in the cytosolic YscEFG complex to the T3SS apparatus. Required for Yop secretion. The polypeptide is Type 3 secretion system chaperone YscE (Yersinia pestis).